Consider the following 215-residue polypeptide: Proteasome subunit beta type-1 (215 aa).

Met1 is subject to N-acetylmethionine. A propeptide spans 1 to 19 (MNGIQVDINRLKKGEVSLG) (removed in mature form). Thr20 serves as the catalytic Nucleophile.

It belongs to the peptidase T1B family. The 26S proteasome consists of a 20S proteasome core and two 19S regulatory subunits. The 20S proteasome core is composed of 28 subunits that are arranged in four stacked rings, resulting in a barrel-shaped structure. The two end rings are each formed by seven alpha subunits, and the two central rings are each formed by seven beta subunits. The catalytic chamber with the active sites is on the inside of the barrel.

It is found in the cytoplasm. The protein localises to the nucleus. It catalyses the reaction Cleavage of peptide bonds with very broad specificity.. The proteasome degrades poly-ubiquitinated proteins in the cytoplasm and in the nucleus. It is essential for the regulated turnover of proteins and for the removal of misfolded proteins. The proteasome is a multicatalytic proteinase complex that is characterized by its ability to cleave peptides with Arg, Phe, Tyr, Leu, and Glu adjacent to the leaving group at neutral or slightly basic pH. It has an ATP-dependent proteolytic activity. PRE3 and PRE4 are necessary for the peptidyl-glutamyl-peptide-hydrolyzing activity. Functionally, this subunit is necessary for the peptidylglutamyl-peptide hydrolyzing activity. This chain is Proteasome subunit beta type-1 (PRE3), found in Saccharomyces cerevisiae (strain ATCC 204508 / S288c) (Baker's yeast).